A 158-amino-acid chain; its full sequence is Chromobox protein homolog 7 (158 aa).

The Chromo domain maps to Phe-11 to Tyr-69. Residues Lys-60 to Ser-124 are disordered. Over residues Gly-68–Arg-78 the composition is skewed to basic residues.

Component of a PRC1-like complex. Distinct PRC1-like core complexes are composed of a RING1 subunit (RING1B or RING1A), one of the six PCGF proteins (PCGF1-6), one PHC protein (PHC1-3) and one of the CBX proteins (CBX2, CBX4, CBX6, CBX7 or CBX8). The composition of the PRC1 complex may differ between the PRC1 complex in pluripotent embryonic stem cells containing RNF2, CBX7 and PCGF2, and the PRC1 complex in differentiating cells containing RNF2, CBX2, CBX4 and BMI1. Interacts with RING1. Interacts with RNF2/RING1B. Interacts with PCGF1, PCGF2, PCGF3, PCGF5 and PCGF6. Interacts (via chromodomain) with histone H3K9Me3 and H3K27me3. Interacts with H3K9Me2 and H4K20Me1. Interacts (via chromodomain) with single-stranded and double-stranded RNA; RNA binding seems to be required for the localization to chromatin.

It localises to the nucleus. It is found in the chromosome. Functionally, component of a Polycomb group (PcG) multiprotein PRC1-like complex, a complex class required to maintain the transcriptionally repressive state of many genes, including Hox genes, throughout development. PcG PRC1 complex acts via chromatin remodeling and modification of histones; it mediates monoubiquitination of histone H2A 'Lys-119', rendering chromatin heritably changed in its expressibility. Promotes histone H3 trimethylation at 'Lys-9' (H3K9me3). Binds to histone H3 trimethylated 'Lys-9' (H3K9me3) or at 'Lys-27' (H3K27me3). May possibly also bind trimethylated lysine residues in other proteins (in vitro). Binds non-coding, single-stranded and double-stranded RNA. Plays a role in the timely repression of differentiation-specific genes in pluripotent embryonic stem cells to maintain the undifferentiated state. Regulator of cellular lifespan by maintaining the repression of CDKN2A, but not by inducing telomerase activity. The chain is Chromobox protein homolog 7 (Cbx7) from Rattus norvegicus (Rat).